Here is a 203-residue protein sequence, read N- to C-terminus: ATP-dependent Clp protease proteolytic subunit (203 aa).

Catalysis depends on S107, which acts as the Nucleophile. The active site involves H132.

Belongs to the peptidase S14 family. As to quaternary structure, fourteen ClpP subunits assemble into 2 heptameric rings which stack back to back to give a disk-like structure with a central cavity, resembling the structure of eukaryotic proteasomes.

The protein localises to the cytoplasm. The catalysed reaction is Hydrolysis of proteins to small peptides in the presence of ATP and magnesium. alpha-casein is the usual test substrate. In the absence of ATP, only oligopeptides shorter than five residues are hydrolyzed (such as succinyl-Leu-Tyr-|-NHMec, and Leu-Tyr-Leu-|-Tyr-Trp, in which cleavage of the -Tyr-|-Leu- and -Tyr-|-Trp bonds also occurs).. Cleaves peptides in various proteins in a process that requires ATP hydrolysis. Has a chymotrypsin-like activity. Plays a major role in the degradation of misfolded proteins. The sequence is that of ATP-dependent Clp protease proteolytic subunit from Shewanella denitrificans (strain OS217 / ATCC BAA-1090 / DSM 15013).